The following is a 640-amino-acid chain: Arogenate dehydrogenase 1, chloroplastic (640 aa).

Residues 1-18 (MAETLITKPPLSLSFTSL) constitute a chloroplast transit peptide. 2 consecutive Prephenate/arogenate dehydrogenase domains span residues 53 to 334 (LRIA…GEND) and 365 to 640 (LKIG…LLTS).

It belongs to the prephenate/arogenate dehydrogenase family. In terms of tissue distribution, expressed in roots, stems, leaves, flowers, siliques and seeds. More abundant in seeds.

Its subcellular location is the plastid. It localises to the chloroplast. The enzyme catalyses L-arogenate + NADP(+) = L-tyrosine + CO2 + NADPH. It functions in the pathway amino-acid biosynthesis; L-tyrosine biosynthesis; L-tyrosine from L-arogenate (NADP(+) route): step 1/1. Functionally, involved in the biosynthesis of tyrosine. Has no prephenate dehydrogenase activity. In Arabidopsis thaliana (Mouse-ear cress), this protein is Arogenate dehydrogenase 1, chloroplastic (TYRAAT1).